A 110-amino-acid polypeptide reads, in one-letter code: MQPGGQFDMQQLLAQAQQMQEAVMQAQAEIAATEVEGQAGGGLVKATIKATGEVQALTIDPKVVDPEDVEGLQDLVIGAINDAMARAQQLAAERLGPLAGGGSMPGLPGF.

It belongs to the YbaB/EbfC family. As to quaternary structure, homodimer.

Its subcellular location is the cytoplasm. The protein localises to the nucleoid. In terms of biological role, binds to DNA and alters its conformation. May be involved in regulation of gene expression, nucleoid organization and DNA protection. The chain is Nucleoid-associated protein NFA_2940 from Nocardia farcinica (strain IFM 10152).